The chain runs to 274 residues: 2-dehydro-3-deoxyphosphooctonate aldolase (274 aa).

Belongs to the KdsA family.

The protein localises to the cytoplasm. The enzyme catalyses D-arabinose 5-phosphate + phosphoenolpyruvate + H2O = 3-deoxy-alpha-D-manno-2-octulosonate-8-phosphate + phosphate. The protein operates within carbohydrate biosynthesis; 3-deoxy-D-manno-octulosonate biosynthesis; 3-deoxy-D-manno-octulosonate from D-ribulose 5-phosphate: step 2/3. It participates in bacterial outer membrane biogenesis; lipopolysaccharide biosynthesis. This Legionella pneumophila (strain Corby) protein is 2-dehydro-3-deoxyphosphooctonate aldolase.